A 143-amino-acid polypeptide reads, in one-letter code: Putative complexin-1 (143 aa).

The tract at residues 15–71 is disordered; the sequence is NEVTGGLGLKDDGGEKTETGEDPEVVAARLEQEERRKEKHRKMEQEREKMRQGIRDK. Composition is skewed to basic and acidic residues over residues 23–33 and 44–71; these read LKDDGGEKTET and LEQE…IRDK. Positions 40–71 form a coiled coil; the sequence is VAARLEQEERRKEKHRKMEQEREKMRQGIRDK.

The protein belongs to the complexin/synaphin family.

It is found in the cytoplasm. Its subcellular location is the cytosol. In terms of biological role, positively regulates a late step in synaptic vesicle exocytosis. The protein is Putative complexin-1 (cpx-1) of Caenorhabditis briggsae.